Here is a 331-residue protein sequence, read N- to C-terminus: D-lactate dehydrogenase (331 aa).

NAD(+) is bound by residues 155-156 (HI), aspartate 175, 206-207 (VP), asparagine 212, 233-235 (AAR), and aspartate 259. Residue arginine 235 is part of the active site. Residue glutamate 264 is part of the active site. Catalysis depends on histidine 296, which acts as the Proton donor.

The protein belongs to the D-isomer specific 2-hydroxyacid dehydrogenase family. Homodimer.

It catalyses the reaction (R)-lactate + NAD(+) = pyruvate + NADH + H(+). The protein is D-lactate dehydrogenase of Leuconostoc mesenteroides subsp. cremoris.